A 223-amino-acid chain; its full sequence is Ribonuclease T (223 aa).

Residues 20–194 (VVIDVETAGF…YDTEQTALLF (175 aa)) form the Exonuclease domain. Residues Asp23, Glu25, His181, and Asp186 each contribute to the Mg(2+) site. The active-site Proton donor/acceptor is the His181.

This sequence belongs to the RNase T family. As to quaternary structure, homodimer. Requires Mg(2+) as cofactor.

Its function is as follows. Trims short 3' overhangs of a variety of RNA species, leaving a one or two nucleotide 3' overhang. Responsible for the end-turnover of tRNA: specifically removes the terminal AMP residue from uncharged tRNA (tRNA-C-C-A). Also appears to be involved in tRNA biosynthesis. The polypeptide is Ribonuclease T (Cronobacter sakazakii (strain ATCC BAA-894) (Enterobacter sakazakii)).